A 179-amino-acid chain; its full sequence is Replication restart protein DnaT (179 aa).

Positions 156–179 (GGLPKRDVNTVSEPDSQIPPGFRG) are disordered.

It belongs to the DnaT family. Homooligomerizes. Interacts with PriB. Component of the replication restart primosome. Primosome assembly occurs via a 'hand-off' mechanism. PriA binds to replication forks, subsequently PriB then DnaT bind; DnaT then displaces ssDNA to generate the helicase loading substrate.

In terms of biological role, involved in the restart of stalled replication forks, which reloads the replicative helicase on sites other than the origin of replication. Can function in multiple replication restart pathways. Displaces ssDNA from a PriB-ssDNA complex. Probably forms a spiral filament on ssDNA. In Shigella dysenteriae serotype 1 (strain Sd197), this protein is Replication restart protein DnaT.